The following is a 158-amino-acid chain: Large ribosomal subunit protein uL16 (158 aa).

The disordered stretch occupies residues 1 to 22 (MLSPKRTKYRKQQRGRMKGKAT).

It belongs to the universal ribosomal protein uL16 family. As to quaternary structure, part of the 50S ribosomal subunit.

In terms of biological role, binds 23S rRNA and is also seen to make contacts with the A and possibly P site tRNAs. The protein is Large ribosomal subunit protein uL16 of Synechococcus sp. (strain JA-3-3Ab) (Cyanobacteria bacterium Yellowstone A-Prime).